Reading from the N-terminus, the 226-residue chain is Cytidylate kinase (226 aa).

Residue 10 to 18 (GPASSGKST) coordinates ATP.

Belongs to the cytidylate kinase family. Type 1 subfamily.

It is found in the cytoplasm. The enzyme catalyses CMP + ATP = CDP + ADP. It carries out the reaction dCMP + ATP = dCDP + ADP. This chain is Cytidylate kinase, found in Streptococcus equi subsp. equi (strain 4047).